The primary structure comprises 217 residues: Adenylate kinase (217 aa).

Position 10–15 (10–15 (GAGKGT)) interacts with ATP. The NMP stretch occupies residues 30-59 (STGDILRAAVSEMTPMGVKAKGYMESGALV). Residues threonine 31, arginine 36, 57-59 (ALV), 85-88 (GFPR), and glutamine 92 each bind AMP. The interval 126 to 163 (GRRTCRLCGKGYHVVFDPPRVSGRCDECLGELFQRDDD) is LID. ATP is bound at residue arginine 127. Residues cysteine 130, cysteine 133, cysteine 150, and cysteine 153 each contribute to the Zn(2+) site. Arginine 160 and arginine 171 together coordinate AMP. Glycine 199 serves as a coordination point for ATP.

The protein belongs to the adenylate kinase family. As to quaternary structure, monomer.

The protein localises to the cytoplasm. It carries out the reaction AMP + ATP = 2 ADP. Its pathway is purine metabolism; AMP biosynthesis via salvage pathway; AMP from ADP: step 1/1. Functionally, catalyzes the reversible transfer of the terminal phosphate group between ATP and AMP. Plays an important role in cellular energy homeostasis and in adenine nucleotide metabolism. This is Adenylate kinase from Geotalea uraniireducens (strain Rf4) (Geobacter uraniireducens).